We begin with the raw amino-acid sequence, 930 residues long: Probable SapB synthase (930 aa).

The Protein kinase domain occupies 256–516 (YTVESALHFS…GSTRADETTR (261 aa)). Residues 262–270 (LHFSNGGGV) and K285 each bind ATP. Catalysis depends on D395, which acts as the Proton acceptor. The chain crosses the membrane as a helical span at residues 447 to 467 (YALACLRIVLFLPLTSLLAVD). Positions 501–527 (GSTRVDGSTRADETTRADETTRLDVTT) are enriched in basic and acidic residues. 2 disordered regions span residues 501 to 558 (GSTR…RDSM) and 911 to 930 (PFLP…HQEP). A compositionally biased stretch (low complexity) spans 532–546 (APDAARRPAGPVAPV). A compositionally biased stretch (basic and acidic residues) spans 547 to 556 (RPDDWPRSRD).

This sequence in the N-terminal section; belongs to the protein kinase superfamily.

It localises to the cell membrane. Its function is as follows. Required for aerial hyphae formation. Probably involved in processing the precursor of SapB to its mature form. This Streptomyces coelicolor (strain ATCC BAA-471 / A3(2) / M145) protein is Probable SapB synthase.